The sequence spans 404 residues: Formate-dependent phosphoribosylglycinamide formyltransferase (404 aa).

N(1)-(5-phospho-beta-D-ribosyl)glycinamide-binding positions include 25–26 (EL) and E85. ATP-binding positions include R118, K159, 164–169 (SSGKGQ), 199–202 (EGFI), and E207. Positions 123-318 (RLAAEELGLP…EFELHARAIL (196 aa)) constitute an ATP-grasp domain. The Mg(2+) site is built by E277 and E289. N(1)-(5-phospho-beta-D-ribosyl)glycinamide-binding positions include D296, K365, and 372 to 373 (RR).

The protein belongs to the PurK/PurT family. In terms of assembly, homodimer.

The catalysed reaction is N(1)-(5-phospho-beta-D-ribosyl)glycinamide + formate + ATP = N(2)-formyl-N(1)-(5-phospho-beta-D-ribosyl)glycinamide + ADP + phosphate + H(+). It functions in the pathway purine metabolism; IMP biosynthesis via de novo pathway; N(2)-formyl-N(1)-(5-phospho-D-ribosyl)glycinamide from N(1)-(5-phospho-D-ribosyl)glycinamide (formate route): step 1/1. Involved in the de novo purine biosynthesis. Catalyzes the transfer of formate to 5-phospho-ribosyl-glycinamide (GAR), producing 5-phospho-ribosyl-N-formylglycinamide (FGAR). Formate is provided by PurU via hydrolysis of 10-formyl-tetrahydrofolate. This chain is Formate-dependent phosphoribosylglycinamide formyltransferase, found in Burkholderia pseudomallei (strain 668).